A 748-amino-acid polypeptide reads, in one-letter code: Polyribonucleotide nucleotidyltransferase (748 aa).

The Mg(2+) site is built by Asp-522 and Asp-528. Residues 588-647 (PRVTTIRVPVDKIGEVIGPKGKIINAITEETGAQISIEDDGTVFVGATDGPSAQAAIDRI) enclose the KH domain. The 70-residue stretch at 659-728 (GERFLGTVVK…KRGKISLVLV (70 aa)) folds into the S1 motif domain.

The protein belongs to the polyribonucleotide nucleotidyltransferase family. It depends on Mg(2+) as a cofactor.

It is found in the cytoplasm. It carries out the reaction RNA(n+1) + phosphate = RNA(n) + a ribonucleoside 5'-diphosphate. Involved in mRNA degradation. Catalyzes the phosphorolysis of single-stranded polyribonucleotides processively in the 3'- to 5'-direction. The sequence is that of Polyribonucleotide nucleotidyltransferase from Mycobacterium avium (strain 104).